The chain runs to 1153 residues: Protein unc-13 homolog 4B (1153 aa).

A disordered region spans residues 54–84 (VLKSSLAPLEENGSGGEEDSDESPDGTLQLS). A C2 1 domain is found at 162 to 288 (ATHEEIYEAA…MKEIAVTASS (127 aa)). 5 residues coordinate Ca(2+): aspartate 195, aspartate 201, aspartate 252, phenylalanine 253, and aspartate 254. In terms of domain architecture, MHD1 spans 637–755 (FEVYLILKRY…RCCIFYAQQM (119 aa)). Residues 869–975 (SNSMDQLMMY…LETSDLIHQY (107 aa)) form the MHD2 domain. Residues 990-1114 (PYGQLTITAQ…EATPPGEQIM (125 aa)) form the C2 2 domain. Positions 1019, 1025, 1083, and 1085 each coordinate Ca(2+).

Belongs to the unc-13 family. As to quaternary structure, interacts with Cam. Ca(2+) is required as a cofactor.

It localises to the cytoplasm. Its subcellular location is the cytoskeleton. The protein resides in the cell projection. It is found in the filopodium. The protein localises to the late endosome. It localises to the lysosome. Functionally, essential for tracheal development in embryos. Functions with the GTPase Rab39 and downstream of dnd, to regulate lumen fusion between previously separate tracheal branches (anastomosis). Essential component of secretory lysosome-related organelles (SLs) that are present in the tracheal fusion tip cells (FCs). Mediates intracellular fusion of the extending tracheal stalk cell lumen in the FCs by recruiting the SNARE complex component Syx1A to the SLs, this may then enable the SLs to interact with complementary SNAREs (such as Syb) present in the apical membrane of the FC-FC interface and the membranes of the separate tracheal stalk cells. May also function in the maturation and exocytosis of the SLs. The protein is Protein unc-13 homolog 4B of Drosophila melanogaster (Fruit fly).